Consider the following 346-residue polypeptide: Archaeosine synthase subunit beta (346 aa).

One can recognise a Radical SAM core domain in the interval 36 to 276; the sequence is GVQTKTLTVI…LRQAKAAHPE (241 aa). The [4Fe-4S] cluster site is built by C51, C59, and C62.

The protein belongs to the radical SAM superfamily. RaSEA family. As to quaternary structure, forms a robust complex with the archaeosine synthase alpha subunit ArcS. This complex likely consists of an alpha(2)beta(2) heterotetrameric structure. It depends on [4Fe-4S] cluster as a cofactor.

It carries out the reaction 7-N-[(5S)-5-amino-5-carboxypentyl]formamidino-7-deazaguanosine(15) in tRNA + S-adenosyl-L-methionine = archaeosine(15) in tRNA + L-1-piperideine-6-carboxylate + 5'-deoxyadenosine + L-methionine + 2 H(+). Its pathway is tRNA modification; archaeosine-tRNA biosynthesis. Radical SAM enzyme involved in the synthesis of archaeosine, a modified nucleoside present in the dihydrouridine loop (D-loop) of archaeal tRNAs. Catalyzes the cleavage of the C(epsilon)-N bond of the lysine moiety of q0kN15-tRNA, leading to the formation of archaeosine at position 15 in tRNAs. In Methanosarcina acetivorans (strain ATCC 35395 / DSM 2834 / JCM 12185 / C2A), this protein is Archaeosine synthase subunit beta.